Reading from the N-terminus, the 681-residue chain is Leucine-rich repeat, immunoglobulin-like domain and transmembrane domain-containing protein 3 (681 aa).

An N-terminal signal peptide occupies residues M1–G19. Residue N18 is glycosylated (N-linked (GlcNAc...) asparagine). Residues T20–S584 are Lumenal-facing. LRR repeat units lie at residues P56–Y79, L80–N103, L104–M128, P129–Y151, and L152–S175. Residues P254–T344 enclose the Ig-like domain. C275 and C328 are disulfide-bonded. N296 carries N-linked (GlcNAc...) asparagine glycosylation. 2 disordered regions span residues T350 to S391 and T425 to P464. The segment covering T378–S391 has biased composition (polar residues). N-linked (GlcNAc...) asparagine glycosylation is found at N485 and N506. A helical transmembrane segment spans residues L585–L605. The Cytoplasmic segment spans residues Y606–G681.

As to expression, detected in the outer plexiform layer (OPL) of the retina, where it localizes to rod and cone ON-bipolar cells (at protein level). Also detected in bipolar cell bodies in the inner retinal layer (INL) (at protein level).

Its subcellular location is the cell projection. The protein resides in the dendrite. It localises to the perikaryon. The protein localises to the endoplasmic reticulum membrane. Its function is as follows. Plays a role in the synapse formation and synaptic transmission between cone photoreceptor cells and retinal bipolar cells. Required for normal transmission of a light-evoked stimulus from the cone photoreceptor cells to the ON-bipolar cells and ON-ganglion cells in the inner retina. Required in retinal ON-bipolar cells for normal localization of the cation channel TRPM1 at dendrite tips. Seems to play a specific role in synaptic contacts made by ON-bipolar cells with cone photoreceptor pedicles. May also have a role in cone synapse formation. Might facilitate FGFR1 exit from the endoplasmic reticulum to the Golgi. Could be a regulator of the FGFRs. In Mus musculus (Mouse), this protein is Leucine-rich repeat, immunoglobulin-like domain and transmembrane domain-containing protein 3.